We begin with the raw amino-acid sequence, 395 residues long: uncharacterized protein (395 aa).

Residues 247–270 (GGTVVPPNPDQPNPTPPDSSSPNY) are disordered. A compositionally biased stretch (pro residues) spans 252–265 (PPNPDQPNPTPPDS).

This is an uncharacterized protein from Vibrio cholerae serotype O1 (strain ATCC 39315 / El Tor Inaba N16961).